A 524-amino-acid chain; its full sequence is 2-isopropylmalate synthase (524 aa).

In terms of domain architecture, Pyruvate carboxyltransferase spans 5-267 (VIIFDTTLRD…HTNIRHSEIH (263 aa)). The Mn(2+) site is built by Asp-14, His-202, His-204, and Asn-238. Residues 392–524 (KLEYLGVQSG…KTDKINTESV (133 aa)) form a regulatory domain region.

The protein belongs to the alpha-IPM synthase/homocitrate synthase family. LeuA type 1 subfamily. In terms of assembly, homodimer. Mn(2+) serves as cofactor.

It is found in the cytoplasm. The enzyme catalyses 3-methyl-2-oxobutanoate + acetyl-CoA + H2O = (2S)-2-isopropylmalate + CoA + H(+). It functions in the pathway amino-acid biosynthesis; L-leucine biosynthesis; L-leucine from 3-methyl-2-oxobutanoate: step 1/4. In terms of biological role, catalyzes the condensation of the acetyl group of acetyl-CoA with 3-methyl-2-oxobutanoate (2-ketoisovalerate) to form 3-carboxy-3-hydroxy-4-methylpentanoate (2-isopropylmalate). The sequence is that of 2-isopropylmalate synthase from Aeromonas hydrophila subsp. hydrophila (strain ATCC 7966 / DSM 30187 / BCRC 13018 / CCUG 14551 / JCM 1027 / KCTC 2358 / NCIMB 9240 / NCTC 8049).